A 7158-amino-acid polypeptide reads, in one-letter code: Twitchin (7158 aa).

2 Ig-like domains span residues 5–97 (PRFT…INLN) and 111–204 (PSFV…LALN). 2 disulfides stabilise this stretch: C25–C81 and C132–C188. Disordered stretches follow at residues 204-381 (NFEE…PIVL), 473-639 (EEEL…TKLR), 658-732 (KKVK…DSMA), and 763-955 (EVKE…IDMR). The segment covering 220–238 (TASPRPSSRGPGSRPSSPK) has biased composition (low complexity). Composition is skewed to basic and acidic residues over residues 242-259 (KSRE…EGSP) and 279-291 (ESRR…KMEV). 2 stretches are compositionally biased toward low complexity: residues 319-340 (SPST…RKGS) and 347-368 (SGTT…ASSD). Residues 377-466 (PPIVLEASRS…GEGQSSAMVK (90 aa)) enclose the Ig-like 3 domain. Residues 504–513 (RVARRSKSKS) are compositionally biased toward basic residues. Over residues 514 to 523 (KSPAPQAKKS) the composition is skewed to low complexity. Basic and acidic residues-rich tracts occupy residues 529 to 540 (GRQEASEVEHKR) and 601 to 618 (KTDS…DTLL). The span at 620 to 630 (KTTTSTKNESS) shows a compositional bias: low complexity. The stretch at 718–764 (VKSGAGGLEKSDSMASLKKLDLKKGKIDDNSDGAFKVQLKKVVKKEV) is one Kelch 1 repeat. 4 stretches are compositionally biased toward basic and acidic residues: residues 763–813 (EVKE…DKPK), 837–850 (KEVE…ELKA), 885–897 (KAHD…EGIK), and 917–955 (SESR…IDMR). An Ig-like 4 domain is found at 980–1072 (PKIVEVPENV…DSADVKLLVT (93 aa)). The interval 1088–1118 (SQAGFQKDGEGGGAGGGGGEKKPMTEAERRQ) is disordered. The span at 1106–1118 (GEKKPMTEAERRQ) shows a compositional bias: basic and acidic residues. Ig-like domains are found at residues 1122–1213 (PGKK…AQLT), 1217–1306 (PPMK…SKVQ), and 1312–1398 (PRHT…AQLI). A disulfide bridge links C1150 with C1201. Fibronectin type-III domains lie at 1598–1690 (PKGP…AKNP), 1696–1791 (KPKN…MKAK), 1891–1988 (PPKG…IKDP), 1994–2087 (KPGR…AKPK), 2189–2282 (PNGP…AKNP), 2288–2383 (KTGT…AKPR), 2483–2576 (PLGP…AKNP), and 2579–2675 (VPGK…AKPR). Residues 2014–2058 (PPHKDGGAPIEEYIVEVRDPDTKEWKEVKRVPDTNASISGLKEGK) form a Kelch 2 repeat. The Ig-like 8 domain maps to 2086–2181 (PKFIPAWLKH…GADEEKANLT (96 aa)). Residues 2207-2253 (WKPPDDDGGEPIEYYEVEKLDTATGRWVPCAKVKDTKAHIDGLKKGQ) form a Kelch 3 repeat. A compositionally biased stretch (basic and acidic residues) spans 2266–2287 (GASDALSTDKDTKAKNPYDEPG). The disordered stretch occupies residues 2266-2295 (GASDALSTDKDTKAKNPYDEPGKTGTPDVV). The stretch at 2502-2547 (KVPEDDGGAPIDHYEIEKMDLATGRWVPCGRSETTKTTVPNLQPGH) is one Kelch 4 repeat. Residues 2679–2763 (PRIHREDLSD…TNINGTDSVT (85 aa)) form the Ig-like 9 domain. Fibronectin type-III domains lie at 2775–2868 (PKGP…AKNP) and 2874–2968 (RPGR…AKPR). The stretch at 2793-2839 (WKPPEDDGGEPIEFYEIEKMNTKDGIWVPCGRSGDTHFTVDSLNKGD) is one Kelch 5 repeat. The disordered stretch occupies residues 2849-2901 (NSEGPSDPLETETDILAKNPFDRPDRPGRPEPTDWDSDHVDLKWDPPLSDGGA). Basic and acidic residues predominate over residues 2868–2892 (PFDRPDRPGRPEPTDWDSDHVDLKW). An Ig-like 10 domain is found at 2972-3062 (PHIDRDALKN…GEDEATVKIN (91 aa)). Fibronectin type-III domains lie at 3070 to 3165 (PNGP…AKDP) and 3171 to 3265 (KTNA…AKAR). Residues 3089–3134 (RAPDDDGGIPIENYVIEKYDTASGRWVPAAKVAGDKTTAVVDGLIP) form a Kelch 6 repeat. An Ig-like 11 domain is found at 3268–3358 (PPVIDRNSIQ…GTDTAEVKVT (91 aa)). Fibronectin type-III domains follow at residues 3365 to 3459 (SPRG…AKDP) and 3465 to 3559 (KPGT…AKPR). The Kelch 7 repeat unit spans residues 3384–3430 (WKEPEDDGGAEISHYVIEKQDAATGRWTACGESKDTNFHVDDLTQGH). In terms of domain architecture, Ig-like 12 spans 3563 to 3653 (PKINRDMFVA…GKDEHEVDVN (91 aa)). Fibronectin type-III domains follow at residues 3661–3753 (PEGP…AKNP), 3759–3853 (APTD…AKPR), 3954–4047 (PEGP…AKNQ), 4053–4146 (PVDK…TKAR), 4246–4340 (PEGP…AKDP), and 4346–4440 (KPGR…TAKP). The stretch at 3972-4018 (WKPPTDNGGTDVLHYIVEKMDTSRGTWQEVGTFPDCTAKVNKLVPGK) is one Kelch 8 repeat. 2 Kelch repeats span residues 4265–4310 (KPPK…LTEG) and 4365–4410 (DPPR…RVQK). Residues 4445-4531 (PKFDLDLDGK…GEAEANIKIT (87 aa)) form the Ig-like 13 domain. Fibronectin type-III domains follow at residues 4538 to 4631 (APEN…IKDP), 4637 to 4733 (APST…CRPY), 4739 to 4834 (APDA…IEEQ), 4936 to 5028 (PTGP…AKNP), 5034 to 5129 (APGQ…ADNA), 5231 to 5326 (SPQH…VAKY), 5333 to 5427 (QPEA…LKSR), and 5430 to 5528 (PPGP…IQES). A Kelch 11 repeat occupies 4557–4602 (DAPKDDGGAEIAGYKIEYQEVGSQIWDKVPGLISGTAYTVRGLEHG). A Kelch 12 repeat occupies 5287–5335 (LNYTVGGLIKDNRYRFRVRAETQYGVSEPCELADVVVAKYQFEVPNQPE). The Ig-like 14 domain maps to 5533–5621 (PQIVVKPEDT…GSDTATANLV (89 aa)). Fibronectin type-III domains follow at residues 5723 to 5817 (PQGP…ARLP) and 5823 to 5919 (SPLN…ASGS). One copy of the Kelch 13 repeat lies at 5742 to 5787 (RPPVTDGGSKITSYVVEKRDLSKDEWVTVTSNVKDMNYIVTGLFEN). 2 consecutive Ig-like domains span residues 5923–6011 (PKIV…ANLR) and 6016–6107 (PRVF…VNVT). Cysteines 5944 and 5995 form a disulfide. Positions 6114 to 6207 (PPRFPIIENI…PTAPVLIPGD (94 aa)) constitute a Fibronectin type-III 31 domain. The region spanning 6261–6516 (YDIHEELGTG…IHQALEHPWL (256 aa)) is the Protein kinase domain. ATP contacts are provided by residues 6267–6275 (LGTGAFGVV) and K6290. D6382 functions as the Proton acceptor in the catalytic mechanism. The interval 6517 to 6581 (TPGNAPGRDS…SIRDAFWDRS (65 aa)) is C-terminal regulatory domain (CDR). Ig-like domains are found at residues 6585 to 6673 (PRFI…VFLN), 6696 to 6795 (PRVE…CVLT), 6863 to 6952 (PSFT…ATLT), 6958 to 7059 (PLLN…ASLV), and 7067 to 7149 (PPVT…KAIA).

The protein belongs to the protein kinase superfamily. CAMK Ser/Thr protein kinase family. As to quaternary structure, may interact (via protein kinase and CRD domains) with mak-1 (via protein kinase domain). The cofactor is Mg(2+). Post-translationally, phosphorylated by mak-1 on the protein kinase domain and/or CDR domain in vitro. Expressed in body wall, anal, vulval, and pharyngeal muscles (at protein level).

The protein localises to the cytoplasm. It is found in the myofibril. The protein resides in the sarcomere. Its subcellular location is the a band. The enzyme catalyses L-seryl-[protein] + ATP = O-phospho-L-seryl-[protein] + ADP + H(+). The catalysed reaction is L-threonyl-[protein] + ATP = O-phospho-L-threonyl-[protein] + ADP + H(+). Forces generated by the contraction/relaxation cycles of muscle activity separate the regulatory domain from the catalytic core, activating the enzyme. At rest, the kinase domain is in a closed conformation. The active site is occupied by the autoinhibitory region (CDR), which makes extensive contact with the catalytic site, blocking substrate binding. At low forces the regulatory tail will unravel reversibly and expose the active site to its substrates, potentially stabilized by binding of Ca/CALM. At high forces the kinase begins to unfold and the integrity of the active site is disrupted. In terms of biological role, regulator of muscle contraction and relaxation. Senses mechanical strain that occurs during muscle activity by unfolding in clearly resolvable steps at differing forces. Plays a role in the organization of sarcomeres in body wall muscles. This Caenorhabditis elegans protein is Twitchin.